Reading from the N-terminus, the 245-residue chain is Eukaryotic translation initiation factor 6 (245 aa).

A phosphoserine; by CK1 mark is found at Ser-174 and Ser-175.

Belongs to the eIF-6 family. As to quaternary structure, monomer. Associates with the 60S ribosomal subunit. In terms of processing, phosphorylation at Ser-174 and Ser-175 promotes nuclear export.

The protein resides in the cytoplasm. The protein localises to the nucleus. Its subcellular location is the nucleolus. Binds to the 60S ribosomal subunit and prevents its association with the 40S ribosomal subunit to form the 80S initiation complex in the cytoplasm. Is also involved in ribosome biogenesis. Associates with pre-60S subunits in the nucleus and is involved in its nuclear export. This is Eukaryotic translation initiation factor 6 from Candida albicans (strain SC5314 / ATCC MYA-2876) (Yeast).